We begin with the raw amino-acid sequence, 370 residues long: 3-dehydroquinate synthase (370 aa).

NAD(+) is bound by residues 108–112, 132–133, lysine 145, and lysine 154; these read GVIGD and TT. Zn(2+) contacts are provided by glutamate 187, histidine 249, and histidine 267.

The protein belongs to the sugar phosphate cyclases superfamily. Dehydroquinate synthase family. Co(2+) is required as a cofactor. Zn(2+) serves as cofactor. It depends on NAD(+) as a cofactor.

The protein resides in the cytoplasm. The catalysed reaction is 7-phospho-2-dehydro-3-deoxy-D-arabino-heptonate = 3-dehydroquinate + phosphate. Its pathway is metabolic intermediate biosynthesis; chorismate biosynthesis; chorismate from D-erythrose 4-phosphate and phosphoenolpyruvate: step 2/7. In terms of biological role, catalyzes the conversion of 3-deoxy-D-arabino-heptulosonate 7-phosphate (DAHP) to dehydroquinate (DHQ). The chain is 3-dehydroquinate synthase from Cereibacter sphaeroides (strain ATCC 17025 / ATH 2.4.3) (Rhodobacter sphaeroides).